A 262-amino-acid chain; its full sequence is Small ribosomal subunit protein eS4y (262 aa).

An S4 RNA-binding domain is found at 42-104; the sequence is LPLVLIIRNR…TNENFRLLYD (63 aa).

It belongs to the eukaryotic ribosomal protein eS4 family.

It localises to the cytoplasm. The chain is Small ribosomal subunit protein eS4y (RPS4B) from Arabidopsis thaliana (Mouse-ear cress).